A 372-amino-acid polypeptide reads, in one-letter code: Cyclin-dependent kinase 9 (372 aa).

Residues 19–315 form the Protein kinase domain; that stretch reads YEKLAKIGQG…SDDALNHDFF (297 aa). 25-33 lines the ATP pocket; it reads IGQGTFGEV. K35 carries the post-translational modification Phosphoserine. At K44 the chain carries N6-acetyllysine; by EP300/CBP, PCAF/KAT2B and GCN5/KAT2A. K48 is a binding site for ATP. N6-acetyllysine; by PCAF/KAT2B and GCN5/KAT2A is present on K48. Residue N54 is modified to Phosphothreonine. 104 to 106 is an ATP binding site; that stretch reads DFC. D149 serves as the catalytic Proton acceptor. The tract at residues 166-191 is T-loop; the sequence is ADFGLARAFSLAKNSQPNRYTNRVVT. An ATP-binding site is contributed by D167. A Phosphoserine modification is found at S175. The residue at position 186 (T186) is a Phosphothreonine; by CaMK1D. Residues 343–372 form a disordered region; sequence RRKGSQITQQSTNQSRNPATTNQTEFERVF. Phosphoserine; by CDK9 and PKA is present on S347. Polar residues predominate over residues 347–366; sequence SQITQQSTNQSRNPATTNQT. T350 carries the phosphothreonine; by CDK9 modification. Phosphoserine; by CDK9 is present on S353. Phosphothreonine; by CDK9 is present on T354. S357 is modified (phosphoserine; by CDK9). 2 positions are modified to phosphothreonine; by CDK9: T362 and T363.

Belongs to the protein kinase superfamily. CMGC Ser/Thr protein kinase family. CDC2/CDKX subfamily. As to quaternary structure, component of the super elongation complex (SEC), at least composed of EAF1, EAF2, CDK9, MLLT3/AF9, AFF (AFF1 or AFF4), the P-TEFb complex and ELL (ELL, ELL2 or ELL3). Associates with CCNT1/cyclin-T1, CCNT2/cyclin-T2 (isoform A and isoform B) or CCNK/cyclin-K to form active P-TEFb. P-TEFb forms a complex with AFF4/AF5Q31 and is part of the super elongation complex (SEC). Component of a complex which is composed of at least 5 members: HTATSF1/Tat-SF1, P-TEFb complex, RNA pol II, SUPT5H and NCL/nucleolin. Associates with UBR5 and forms a transcription regulatory complex composed of CDK9, RNAP II, UBR5 and TFIIS/TCEA1 that can stimulate target gene transcription (e.g. gamma fibrinogen/FGG) by recruiting their promoters. Component of the 7SK snRNP inactive complex which is composed of at least 8 members: P-TEFb (composed of CDK9 and CCNT1/cyclin-T1), HEXIM1, HEXIM2, LARP7, BCDIN3, SART3 proteins and 7SK and U6 snRNAs. This inactive 7SK snRNP complex can also interact with NCOR1 and HDAC3, probably to regulate CDK9 acetylation. Release of P-TEFb from P-TEFb/7SK snRNP complex requires both PP2B to transduce calcium Ca(2+) signaling in response to stimuli (e.g. UV or hexamethylene bisacetamide (HMBA)) and PPP1CA to dephosphorylate Thr-186. This released P-TEFb remains inactive in the pre-initiation complex with BRD4 until new Thr-186 phosphorylation occurs after the synthesis of a short RNA. Interacts with BRD4; to target chromatin binding. Interacts with JMJD6. Interacts with activated nuclear STAT3 and RELA/p65. Binds to AR and MYOD1. Forms a complex composed of CDK9, CCNT1/cyclin-T1, EP300 and GATA4 that stimulates hypertrophy in cardiomyocytes. The large PER complex involved in the repression of transcriptional termination is composed of at least PER2, CDK9, DDX5, DHX9, NCBP1 and POLR2A. Interacts with HSF1. Interacts with TBX21. Isoform 3: binds to KU70/XRCC6. Interacts with WDR43. Interacts with ZMYND8; the association appears to occur between homodimeric ZMYND8 and the activated form of the P-TEFb complex. (Microbial infection) Interacts with the acidic/proline-rich region of HIV-1 and HIV-2 Tat via T-loop region and is thus required for HIV to hijack host transcription machinery during its replication through cooperative binding to viral TAR RNA. In terms of assembly, (Microbial infection) Interacts with human herpes virus 1 (HHV-1) protein ICP22; this interaction blocks the recruitment of positive transcription elongation factor b (P-TEFb) to the viral promoter. Autophosphorylation at Thr-186, Ser-347, Thr-350, Ser-353, Thr-354 and Ser-357 triggers kinase activity by promoting cyclin and substrate binding (e.g. HIV TAT) upon conformational changes. Thr-186 phosphorylation requires the calcium Ca(2+) signaling pathway, including CaMK1D and calmodulin. This inhibition is relieved by Thr-29 dephosphorylation. However, phosphorylation at Thr-29 is inhibitory within the HIV transcription initiation complex. Phosphorylation at Ser-175 inhibits kinase activity. Can be phosphorylated on either Thr-362 or Thr-363 but not on both simultaneously. In terms of processing, dephosphorylation of Thr-186 by PPM1A and PPM1B blocks CDK9 activity and may lead to CDK9 proteasomal degradation. However, PPP1CA-mediated Thr-186 dephosphorylation is required to release P-TEFb from its inactive P-TEFb/7SK snRNP complex. Dephosphorylated at Ser-347 by the PNUTS-PP1 complex during RNA polymerase II transcription pause-release. Dephosphorylation of C-terminus Thr and Ser residues by protein phosphatase-1 (PP1) triggers CDK9 activity, contributing to the activation of HIV-1 transcription. Post-translationally, N6-acetylation of Lys-44 promotes kinase activity, whereas acetylation of both Lys-44 and Lys-48 mediated by PCAF/KAT2B and GCN5/KAT2A reduces kinase activity. The acetylated form associates with PML bodies in the nuclear matrix and with the transcriptionally silent HIV-1 genome; deacetylated upon transcription stimulation. Deacetylated by SIRT7, promoting the kinase activity and subsequent 'Ser-2' phosphorylation of the C-terminal domain (CTD) of RNA polymerase II. Polyubiquitinated and thus activated by UBR5. This ubiquitination is promoted by TFIIS/TCEA1 and favors 'Ser-2' phosphorylation of RPB1/POLR2A CTD. In terms of tissue distribution, ubiquitous.

Its subcellular location is the nucleus. The protein resides in the cytoplasm. It is found in the PML body. The enzyme catalyses L-seryl-[protein] + ATP = O-phospho-L-seryl-[protein] + ADP + H(+). The catalysed reaction is L-threonyl-[protein] + ATP = O-phospho-L-threonyl-[protein] + ADP + H(+). It catalyses the reaction [DNA-directed RNA polymerase] + ATP = phospho-[DNA-directed RNA polymerase] + ADP + H(+). Its activity is regulated as follows. Inhibited by CDKI-71, CR8, GPC-286199, AG-024322, flavopiridol (alvocidib), RBG-286147, anilinopyrimidine 32, arylazopyrazole 31b, indirubin 3'-monoxime, meriolin 3,P276-00, olomoucine II, pyrazolotriazine, meriolin, variolin, thiazolyl-pyrimidine, thiazolyl-pyrimidine, indirubin-30-monoxime, ZK 304709, AG-012986, AT7519, R547, RGB-286638, imidazole pyrimidine, EXEL-3700, EXEL-8647, 5,6-dichloro-1-b-ribofur-anosyl-benzimidazole (DRB), P276-00, roscovitine (seliciclib, CYC202) and SNS-032 (BMS-387032). Activation by Thr-186 phosphorylation is calcium Ca(2+) signaling pathway-dependent; actively inactivated by dephosphorylation mediated by PPP1CA, PPM1A and PPM1B. Reversibly repressed by acetylation at Lys-44 and Lys-48. Functionally, protein kinase involved in the regulation of transcription. Member of the cyclin-dependent kinase pair (CDK9/cyclin-T) complex, also called positive transcription elongation factor b (P-TEFb), which facilitates the transition from abortive to productive elongation by phosphorylating the CTD (C-terminal domain) of the large subunit of RNA polymerase II (RNAP II) POLR2A, SUPT5H and RDBP. This complex is inactive when in the 7SK snRNP complex form. Phosphorylates EP300, MYOD1, RPB1/POLR2A and AR and the negative elongation factors DSIF and NELFE. Regulates cytokine inducible transcription networks by facilitating promoter recognition of target transcription factors (e.g. TNF-inducible RELA/p65 activation and IL-6-inducible STAT3 signaling). Promotes RNA synthesis in genetic programs for cell growth, differentiation and viral pathogenesis. P-TEFb is also involved in cotranscriptional histone modification, mRNA processing and mRNA export. Modulates a complex network of chromatin modifications including histone H2B monoubiquitination (H2Bub1), H3 lysine 4 trimethylation (H3K4me3) and H3K36me3; integrates phosphorylation during transcription with chromatin modifications to control co-transcriptional histone mRNA processing. The CDK9/cyclin-K complex has also a kinase activity towards CTD of RNAP II and can substitute for CDK9/cyclin-T P-TEFb in vitro. Replication stress response protein; the CDK9/cyclin-K complex is required for genome integrity maintenance, by promoting cell cycle recovery from replication arrest and limiting single-stranded DNA amount in response to replication stress, thus reducing the breakdown of stalled replication forks and avoiding DNA damage. In addition, probable function in DNA repair of isoform 2 via interaction with KU70/XRCC6. Promotes cardiac myocyte enlargement. RPB1/POLR2A phosphorylation on 'Ser-2' in CTD activates transcription. AR phosphorylation modulates AR transcription factor promoter selectivity and cell growth. DSIF and NELF phosphorylation promotes transcription by inhibiting their negative effect. The phosphorylation of MYOD1 enhances its transcriptional activity and thus promotes muscle differentiation. Catalyzes phosphorylation of KAT5, promoting KAT5 recruitment to chromatin and histone acetyltransferase activity. The protein is Cyclin-dependent kinase 9 of Homo sapiens (Human).